A 1042-amino-acid polypeptide reads, in one-letter code: Putative type I restriction enzyme MjaIXP endonuclease subunit (1042 aa).

One can recognise a Helicase ATP-binding domain in the interval 323–487 (GETPEDRRIG…FLVFGDYISA (165 aa)). The DEAH box signature appears at 439–442 (DEAH). Residues 551-731 (LTEDYLSKVS…DIKVVIEEMK (181 aa)) enclose the Helicase C-terminal domain.

Belongs to the HsdR family. The type I restriction/modification system is composed of three polypeptides R, M and S.

It carries out the reaction Endonucleolytic cleavage of DNA to give random double-stranded fragments with terminal 5'-phosphates, ATP is simultaneously hydrolyzed.. In terms of biological role, the restriction (R) subunit of a type I restriction enzyme that recognizes 5'-CCAN(5)GTR-3' and cleaves a random distance away. The R subunit is required for both nuclease and ATPase activities, but not for modification. After locating a non-methylated recognition site, the enzyme complex serves as a molecular motor that translocates DNA in an ATP-dependent manner until a collision occurs that triggers cleavage. This Methanocaldococcus jannaschii (strain ATCC 43067 / DSM 2661 / JAL-1 / JCM 10045 / NBRC 100440) (Methanococcus jannaschii) protein is Putative type I restriction enzyme MjaIXP endonuclease subunit.